A 380-amino-acid polypeptide reads, in one-letter code: O-phospho-L-seryl-tRNA:Cys-tRNA synthase (380 aa).

Pyridoxal 5'-phosphate is bound by residues 86 to 87 (AR), N192, and 215 to 217 (SGH). An N6-(pyridoxal phosphate)lysine modification is found at K218.

This sequence belongs to the SepCysS family. In terms of assembly, homodimer. Interacts with SepRS. The cofactor is pyridoxal 5'-phosphate.

It carries out the reaction O-phospho-L-seryl-tRNA(Cys) + hydrogen sulfide + H(+) = L-cysteinyl-tRNA(Cys) + phosphate. Its function is as follows. Converts O-phospho-L-seryl-tRNA(Cys) (Sep-tRNA(Cys)) to L-cysteinyl-tRNA(Cys) (Cys-tRNA(Cys)). This chain is O-phospho-L-seryl-tRNA:Cys-tRNA synthase, found in Methanococcus maripaludis (strain C6 / ATCC BAA-1332).